The following is a 307-amino-acid chain: NAD kinase (307 aa).

Residue D85 is the Proton acceptor of the active site. NAD(+)-binding positions include 85-86 (DG), R90, 159-160 (NE), D189, and 200-205 (TAYAFS).

This sequence belongs to the NAD kinase family. It depends on a divalent metal cation as a cofactor.

It is found in the cytoplasm. The enzyme catalyses NAD(+) + ATP = ADP + NADP(+) + H(+). Functionally, involved in the regulation of the intracellular balance of NAD and NADP, and is a key enzyme in the biosynthesis of NADP. Catalyzes specifically the phosphorylation on 2'-hydroxyl of the adenosine moiety of NAD to yield NADP. The protein is NAD kinase of Mycobacterium bovis (strain ATCC BAA-935 / AF2122/97).